The primary structure comprises 370 residues: Phosphate acyltransferase (370 aa).

Positions 349-370 are disordered; the sequence is SAGRAGQDAPDEMAAPGRSEKR.

Belongs to the PlsX family. As to quaternary structure, homodimer. Probably interacts with PlsY.

Its subcellular location is the cytoplasm. It carries out the reaction a fatty acyl-[ACP] + phosphate = an acyl phosphate + holo-[ACP]. Its pathway is lipid metabolism; phospholipid metabolism. Functionally, catalyzes the reversible formation of acyl-phosphate (acyl-PO(4)) from acyl-[acyl-carrier-protein] (acyl-ACP). This enzyme utilizes acyl-ACP as fatty acyl donor, but not acyl-CoA. This chain is Phosphate acyltransferase, found in Cereibacter sphaeroides (strain ATCC 17023 / DSM 158 / JCM 6121 / CCUG 31486 / LMG 2827 / NBRC 12203 / NCIMB 8253 / ATH 2.4.1.) (Rhodobacter sphaeroides).